A 946-amino-acid polypeptide reads, in one-letter code: Bifunctional glutamine synthetase adenylyltransferase/adenylyl-removing enzyme (946 aa).

The segment at 1 to 440 (MKPLSSPLQQ…VFNELIGDDE (440 aa)) is adenylyl removase. An adenylyl transferase region spans residues 449-946 (SEQWRELWQD…ASWQKWLVEE (498 aa)).

It belongs to the GlnE family. It depends on Mg(2+) as a cofactor.

The enzyme catalyses [glutamine synthetase]-O(4)-(5'-adenylyl)-L-tyrosine + phosphate = [glutamine synthetase]-L-tyrosine + ADP. It catalyses the reaction [glutamine synthetase]-L-tyrosine + ATP = [glutamine synthetase]-O(4)-(5'-adenylyl)-L-tyrosine + diphosphate. Its function is as follows. Involved in the regulation of glutamine synthetase GlnA, a key enzyme in the process to assimilate ammonia. When cellular nitrogen levels are high, the C-terminal adenylyl transferase (AT) inactivates GlnA by covalent transfer of an adenylyl group from ATP to specific tyrosine residue of GlnA, thus reducing its activity. Conversely, when nitrogen levels are low, the N-terminal adenylyl removase (AR) activates GlnA by removing the adenylyl group by phosphorolysis, increasing its activity. The regulatory region of GlnE binds the signal transduction protein PII (GlnB) which indicates the nitrogen status of the cell. In Shigella dysenteriae serotype 1 (strain Sd197), this protein is Bifunctional glutamine synthetase adenylyltransferase/adenylyl-removing enzyme.